Consider the following 309-residue polypeptide: Clotting factor G beta subunit (309 aa).

Positions 1 to 31 are cleaved as a signal peptide; sequence MDISFLVFITLSMALFSSNVTGTSVTSRVRR. Disulfide bonds link Cys-38–Cys-158, Cys-74–Cys-90, Cys-205–Cys-227, and Cys-238–Cys-268. One can recognise a Peptidase S1 domain in the interval 47–292; that stretch reads IIGGGIATPH…YVNWLQEITF (246 aa). The active-site Charge relay system is His-89. Asn-100 carries N-linked (GlcNAc...) asparagine glycosylation. Asp-138 (charge relay system) is an active-site residue. N-linked (GlcNAc...) asparagine glycosylation is present at Asn-206. Residue Ser-242 is the Charge relay system of the active site.

Belongs to the peptidase S1 family. Clotting factor G is a heterodimer composed of two non-covalently associated subunits, alpha and beta. Upon activation, converted to a two-chain active form linked by a disulfide bond. Forms a covalent heterodimer with intracellular coagulation inhibitor 3/LICI-3. In terms of tissue distribution, expressed in the hemocytes (at protein level).

It catalyses the reaction Selective cleavage of 98-Arg-|-Ile-99 bond in Limulus proclotting enzyme to form active clotting enzyme.. Its activity is regulated as follows. Binding to (1-&gt;3)-beta-D-glucan to alpha subunit, induces autocatalysis and activation of beta subunit. Inhibited by intracellular coagulation inhibitor 3/LICI-3 and to a lesser extend by intracellular coagulation inhibitor 2/LICI-2. Functionally, component of the heterodimer clotting factor G which may play a role in defense mechanisms against fungi. Initiates a (1-&gt;3)-beta-glucan-sensing clotting pathway whereby the alpha subunit binds to glucans containing (1-&gt;3)-beta linkages, which are components of the fungal cell wall, and the beta subunit catalyzes the activation of proclotting enzyme. This Tachypleus tridentatus (Japanese horseshoe crab) protein is Clotting factor G beta subunit.